Here is a 78-residue protein sequence, read N- to C-terminus: Translation initiation factor IF-1 (78 aa).

Residues 2 to 78 enclose the S1-like domain; it reads SKNNLNETES…TQARITYRFK (77 aa).

It belongs to the IF-1 family. Component of the 30S ribosomal translation pre-initiation complex which assembles on the 30S ribosome in the order IF-2 and IF-3, IF-1 and N-formylmethionyl-tRNA(fMet); mRNA recruitment can occur at any time during PIC assembly.

Its subcellular location is the cytoplasm. One of the essential components for the initiation of protein synthesis. Stabilizes the binding of IF-2 and IF-3 on the 30S subunit to which N-formylmethionyl-tRNA(fMet) subsequently binds. Helps modulate mRNA selection, yielding the 30S pre-initiation complex (PIC). Upon addition of the 50S ribosomal subunit IF-1, IF-2 and IF-3 are released leaving the mature 70S translation initiation complex. This chain is Translation initiation factor IF-1, found in Aster yellows witches'-broom phytoplasma (strain AYWB).